The following is a 258-amino-acid chain: Acetylglutamate kinase (258 aa).

Substrate-binding positions include 40–41 (GG), R62, and N158.

Belongs to the acetylglutamate kinase family. ArgB subfamily.

It is found in the cytoplasm. The catalysed reaction is N-acetyl-L-glutamate + ATP = N-acetyl-L-glutamyl 5-phosphate + ADP. The protein operates within amino-acid biosynthesis; L-arginine biosynthesis; N(2)-acetyl-L-ornithine from L-glutamate: step 2/4. Functionally, catalyzes the ATP-dependent phosphorylation of N-acetyl-L-glutamate. The chain is Acetylglutamate kinase from Azobacteroides pseudotrichonymphae genomovar. CFP2.